Consider the following 428-residue polypeptide: Aerobic C4-dicarboxylate transport protein (428 aa).

9 helical membrane-spanning segments follow: residues leucine 5–tyrosine 27, methionine 47–methionine 64, alanine 77–valine 99, valine 141–alanine 163, valine 184–phenylalanine 206, leucine 216–leucine 238, valine 289–methionine 311, isoleucine 326–glycine 348, and valine 353–isoleucine 375.

It belongs to the dicarboxylate/amino acid:cation symporter (DAACS) (TC 2.A.23) family.

The protein localises to the cell inner membrane. Its function is as follows. Responsible for the transport of dicarboxylates such as succinate, fumarate, and malate from the periplasm across the inner membrane. This chain is Aerobic C4-dicarboxylate transport protein (dctA), found in Salmonella typhimurium (strain LT2 / SGSC1412 / ATCC 700720).